A 174-amino-acid polypeptide reads, in one-letter code: Ferritin, heavy subunit (174 aa).

Positions 7–156 (QNFHKDCEAA…DWVTNLRRLG (150 aa)) constitute a Ferritin-like diiron domain. Residues glutamate 24, glutamate 59, histidine 62, glutamate 104, and glutamine 138 each coordinate Fe cation.

Belongs to the ferritin family. In terms of assembly, in liver, forms a heteromer consisting of middle and heavy subunits. The functional molecule forms a roughly spherical shell with a diameter of 12 nm and contains a central cavity into which the insoluble mineral iron core is deposited. Liver (at protein level).

The enzyme catalyses 4 Fe(2+) + O2 + 4 H(+) = 4 Fe(3+) + 2 H2O. Functionally, stores iron in a soluble, non-toxic, readily available form. Important for iron homeostasis. Has ferroxidase activity. Iron is taken up in the ferrous form and deposited as ferric hydroxides after oxidation. Also plays a role in delivery of iron to cells. Mediates iron uptake in capsule cells of the developing kidney. Delivery to lysosomes is mediated by the cargo receptor NCOA4 for autophagic degradation and release of iron. The sequence is that of Ferritin, heavy subunit from Trematomus bernacchii (Emerald rockcod).